Reading from the N-terminus, the 529-residue chain is GMP synthase [glutamine-hydrolyzing] (529 aa).

A Glutamine amidotransferase type-1 domain is found at 17 to 206 (TILVLDFGSQ…AIDICQASNN (190 aa)). Cysteine 93 serves as the catalytic Nucleophile. Active-site residues include histidine 180 and glutamate 182. Residues 207–404 (WTMENFIDTE…MGVPHDLVWR (198 aa)) enclose the GMPS ATP-PPase domain. Residue 235–241 (SGGVDST) participates in ATP binding. Residues arginine 308, aspartate 466, lysine 521, and glutamate 527 each coordinate XMP.

In terms of assembly, homodimer. It depends on Mg(2+) as a cofactor.

It localises to the cytoplasm. The protein localises to the cytosol. It catalyses the reaction XMP + L-glutamine + ATP + H2O = GMP + L-glutamate + AMP + diphosphate + 2 H(+). It functions in the pathway purine metabolism; GMP biosynthesis; GMP from XMP (L-Gln route): step 1/1. Its function is as follows. Catalyzes the conversion of xanthine monophosphate (XMP) to GMP in the presence of glutamine and ATP through an adenyl-XMP intermediate. In Debaryomyces hansenii (strain ATCC 36239 / CBS 767 / BCRC 21394 / JCM 1990 / NBRC 0083 / IGC 2968) (Yeast), this protein is GMP synthase [glutamine-hydrolyzing] (GUA1).